The following is a 434-amino-acid chain: Putative nuclease OPG089 (434 aa).

Residues D33, D74, E168, D170, D196, and D198 each coordinate Mg(2+).

This sequence belongs to the XPG/RAD2 endonuclease family. FEN1 subfamily. It depends on Mg(2+) as a cofactor.

It is found in the virion. Functionally, putative nuclease that seems to be required for double-strand break repair, homologous recombination, and production of full-length viral genomic DNA. The polypeptide is Putative nuclease OPG089 (OPG089) (Vaccinia virus (strain Copenhagen) (VACV)).